The following is a 94-amino-acid chain: Exodeoxyribonuclease 7 small subunit (94 aa).

It belongs to the XseB family. Heterooligomer composed of large and small subunits.

It localises to the cytoplasm. The enzyme catalyses Exonucleolytic cleavage in either 5'- to 3'- or 3'- to 5'-direction to yield nucleoside 5'-phosphates.. Its function is as follows. Bidirectionally degrades single-stranded DNA into large acid-insoluble oligonucleotides, which are then degraded further into small acid-soluble oligonucleotides. This chain is Exodeoxyribonuclease 7 small subunit, found in Ralstonia nicotianae (strain ATCC BAA-1114 / GMI1000) (Ralstonia solanacearum).